Here is a 347-residue protein sequence, read N- to C-terminus: D-alanine--D-alanine ligase (347 aa).

Positions 133–342 constitute an ATP-grasp domain; the sequence is KQAFAQASLP…FPDLVHRLIQ (210 aa). 169-224 lines the ATP pocket; sequence ETELGYPCFVKPANLGSSVGIAKVRDRAELEAALDQAAALDRRLIIEAAIDNPREV. Mg(2+) contacts are provided by aspartate 296, glutamate 309, and asparagine 311.

The protein belongs to the D-alanine--D-alanine ligase family. The cofactor is Mg(2+). Mn(2+) is required as a cofactor.

It is found in the cytoplasm. It catalyses the reaction 2 D-alanine + ATP = D-alanyl-D-alanine + ADP + phosphate + H(+). Its pathway is cell wall biogenesis; peptidoglycan biosynthesis. Functionally, cell wall formation. This Synechococcus elongatus (strain ATCC 33912 / PCC 7942 / FACHB-805) (Anacystis nidulans R2) protein is D-alanine--D-alanine ligase.